Here is a 453-residue protein sequence, read N- to C-terminus: Bifunctional protein GlmU (453 aa).

The pyrophosphorylase stretch occupies residues 1-227 (MNKLSVVILA…LMEVEGVNNR (227 aa)). UDP-N-acetyl-alpha-D-glucosamine contacts are provided by residues 9-12 (LAAG), K23, Q74, 79-80 (GT), 101-103 (YGD), G138, E152, N167, and N225. D103 provides a ligand contact to Mg(2+). N225 contributes to the Mg(2+) binding site. A linker region spans residues 228–248 (LQLANLERHYQRKQVEKLLLA). Positions 249 to 453 (GVTFADPARF…ISNWQRPKRK (205 aa)) are N-acetyltransferase. Positions 331 and 349 each coordinate UDP-N-acetyl-alpha-D-glucosamine. Residue H361 is the Proton acceptor of the active site. Residues Y364 and N375 each contribute to the UDP-N-acetyl-alpha-D-glucosamine site. Acetyl-CoA is bound by residues A378, 384–385 (NY), S403, A421, and R438.

This sequence in the N-terminal section; belongs to the N-acetylglucosamine-1-phosphate uridyltransferase family. The protein in the C-terminal section; belongs to the transferase hexapeptide repeat family. Homotrimer. It depends on Mg(2+) as a cofactor.

The protein resides in the cytoplasm. It catalyses the reaction alpha-D-glucosamine 1-phosphate + acetyl-CoA = N-acetyl-alpha-D-glucosamine 1-phosphate + CoA + H(+). The catalysed reaction is N-acetyl-alpha-D-glucosamine 1-phosphate + UTP + H(+) = UDP-N-acetyl-alpha-D-glucosamine + diphosphate. It participates in nucleotide-sugar biosynthesis; UDP-N-acetyl-alpha-D-glucosamine biosynthesis; N-acetyl-alpha-D-glucosamine 1-phosphate from alpha-D-glucosamine 6-phosphate (route II): step 2/2. It functions in the pathway nucleotide-sugar biosynthesis; UDP-N-acetyl-alpha-D-glucosamine biosynthesis; UDP-N-acetyl-alpha-D-glucosamine from N-acetyl-alpha-D-glucosamine 1-phosphate: step 1/1. Its pathway is bacterial outer membrane biogenesis; LPS lipid A biosynthesis. Functionally, catalyzes the last two sequential reactions in the de novo biosynthetic pathway for UDP-N-acetylglucosamine (UDP-GlcNAc). The C-terminal domain catalyzes the transfer of acetyl group from acetyl coenzyme A to glucosamine-1-phosphate (GlcN-1-P) to produce N-acetylglucosamine-1-phosphate (GlcNAc-1-P), which is converted into UDP-GlcNAc by the transfer of uridine 5-monophosphate (from uridine 5-triphosphate), a reaction catalyzed by the N-terminal domain. The sequence is that of Bifunctional protein GlmU from Histophilus somni (strain 2336) (Haemophilus somnus).